A 185-amino-acid polypeptide reads, in one-letter code: Capsid protein (185 aa).

Residues 136-185 form a disordered region; that stretch reads NAPILSTLPETTVVRRRDRGRSPRRRTPSPRRRRSQSPRRRRSQSRESQC. Basic residues predominate over residues 149–178; sequence VRRRDRGRSPRRRTPSPRRRRSQSPRRRRS. Phosphoserine; by host occurs at positions 157, 164, and 172. One copy of the 1; half-length repeat lies at 157-163; that stretch reads SPRRRTP. The 3 X 8 AA repeats of S-P-R-R-R-[PR]-S-Q stretch occupies residues 157 to 179; it reads SPRRRTPSPRRRRSQSPRRRRSQ. The short motif at 160-177 is the Bipartite nuclear localization signal element; the sequence is RRTPSPRRRRSQSPRRRR. 2 repeat units span residues 164-171 and 172-179. Positions 179-185 are RNA binding; it reads QSRESQC.

Belongs to the orthohepadnavirus core antigen family. In terms of assembly, homodimerizes, then multimerizes. Interacts with cytosol exposed regions of viral L glycoprotein present in the reticulum-to-Golgi compartment. Interacts with human FLNB. Phosphorylated form interacts with host importin alpha; this interaction depends on the exposure of the NLS, which itself depends upon genome maturation and/or phosphorylation of the capsid protein. Interacts with host NUP153. In terms of processing, phosphorylated by host SRPK1, SRPK2, and maybe protein kinase C or GAPDH. Phosphorylation is critical for pregenomic RNA packaging. Protein kinase C phosphorylation is stimulated by HBx protein and may play a role in transport of the viral genome to the nucleus at the late step during the viral replication cycle.

It localises to the virion. The protein resides in the host cytoplasm. In terms of biological role, self assembles to form an icosahedral capsid. Most capsids appear to be large particles with an icosahedral symmetry of T=4 and consist of 240 copies of capsid protein, though a fraction forms smaller T=3 particles consisting of 180 capsid proteins. Entering capsids are transported along microtubules to the nucleus. Phosphorylation of the capsid is thought to induce exposure of nuclear localization signal in the C-terminal portion of the capsid protein that allows binding to the nuclear pore complex via the importin (karyopherin-) alpha and beta. Capsids are imported in intact form through the nuclear pore into the nuclear basket, where it probably binds NUP153. Only capsids that contain the mature viral genome can release the viral DNA and capsid protein into the nucleoplasm. Immature capsids get stuck in the basket. Capsids encapsulate the pre-genomic RNA and the P protein. Pre-genomic RNA is reverse-transcribed into DNA while the capsid is still in the cytoplasm. The capsid can then either be directed to the nucleus, providing more genomes for transcription, or bud through the endoplasmic reticulum to provide new virions. This is Capsid protein from Hepatitis B virus genotype A1 subtype adw (isolate Philippines/pFDW294/1988) (HBV-A).